A 715-amino-acid polypeptide reads, in one-letter code: Polyribonucleotide nucleotidyltransferase (715 aa).

2 residues coordinate Mg(2+): aspartate 500 and aspartate 506. The KH domain occupies 567–634 (PKVKMIRINP…AYIESLVREA (68 aa)). Residues 637–712 (GELYEAKVTR…ERGRVDLSRK (76 aa)) enclose the S1 motif domain.

The protein belongs to the polyribonucleotide nucleotidyltransferase family. Mg(2+) is required as a cofactor.

It localises to the cytoplasm. The enzyme catalyses RNA(n+1) + phosphate = RNA(n) + a ribonucleoside 5'-diphosphate. Involved in mRNA degradation. Catalyzes the phosphorolysis of single-stranded polyribonucleotides processively in the 3'- to 5'-direction. This Acholeplasma laidlawii (strain PG-8A) protein is Polyribonucleotide nucleotidyltransferase.